We begin with the raw amino-acid sequence, 620 residues long: Eukaryotic translation initiation factor 2-alpha kinase 1 (620 aa).

A disordered region spans residues 1–38 (MLGGGSVDGERDTDDDAAGAVAAPPAIDFPAEVSDPKY). A compositionally biased stretch (low complexity) spans 18-28 (AGAVAAPPAID). The SIFI-degron motif lies at 85-104 (LHSKQVFKLLCQTFIKMGLL). The region spanning 167 to 581 (FEELAILGKG…ALQLLQSELF (415 aa)) is the Protein kinase domain. ATP contacts are provided by residues 173–181 (LGKGGYGRV) and K196. T283 is subject to Phosphothreonine. One copy of the HRM 1 repeat lies at 408–413 (ACPYVM). D440 acts as the Proton acceptor in catalysis. Residues T484 and T486 each carry the phosphothreonine; by autocatalysis modification. T491 bears the Phosphothreonine mark. The stretch at 550–555 (RCPVQA) is one HRM 2 repeat.

Belongs to the protein kinase superfamily. Ser/Thr protein kinase family. GCN2 subfamily. Synthesized in an inactive form that binds to the N-terminal domain of CDC37. Has to be associated with a multiprotein complex containing Hsp90, CDC37 and PPP5C for maturation and activation by autophosphorylation. The phosphatase PPP5C modulates this activation. Homodimer; homodimerizes in presence of heme, forming a disulfide-linked inactive homodimer. Interacts with DELE1; binds both to full-length DELE1 and processed form of DELE1 (S-DELE1) in response to stress, leading to activate its protein kinase activity and trigger the integrated stress response (ISR). In terms of processing, activated by autophosphorylation; phosphorylated predominantly on serine and threonine residues, but also on tyrosine residues. Autophosphorylation at Thr-486 is required for kinase activation. The active autophosphorylated form apparently is largely refractory to cellular heme fluctuations. Post-translationally, ubiquitinated and degraded by the SIFI complex once the mitochondrial stress has been resolved, thereby providing stress response silencing. Within the SIFI complex, UBR4 initiates ubiquitin chain that are further elongated or branched by KCMF1.

The protein localises to the cytoplasm. The enzyme catalyses L-seryl-[protein] + ATP = O-phospho-L-seryl-[protein] + ADP + H(+). It catalyses the reaction L-threonyl-[protein] + ATP = O-phospho-L-threonyl-[protein] + ADP + H(+). Its activity is regulated as follows. In normal conditions, the protein kinase activity is inhibited; inhibition is relieved by various stress conditions. Inhibited by heme: in presence of heme, forms a disulfide-linked inactive homodimer. Heme depletion relieves inhibition and stimulates kinase activity by autophosphorylation. Inhibited by the heme metabolites biliverdin and bilirubin. Induced by oxidative stress generated by arsenite treatment. Binding of nitric oxide (NO) to the heme iron in the N-terminal heme-binding domain activates the kinase activity, while binding of carbon monoxide (CO) suppresses kinase activity. Protein kinase activity is also activated upon binding to DELE1 in response to various stress, triggering the integrated stress response (ISR): activated by full-length DELE1 in response to iron deficiency, while it is activated by the processed form of DELE1 (S-DELE1) in response to mitochondrial stress. Its function is as follows. Metabolic-stress sensing protein kinase that phosphorylates the alpha subunit of eukaryotic translation initiation factor 2 (EIF2S1/eIF-2-alpha) in response to various stress conditions. Key activator of the integrated stress response (ISR) required for adaptation to various stress, such as heme deficiency, oxidative stress, osmotic shock, mitochondrial dysfunction and heat shock. EIF2S1/eIF-2-alpha phosphorylation in response to stress converts EIF2S1/eIF-2-alpha in a global protein synthesis inhibitor, leading to a global attenuation of cap-dependent translation, while concomitantly initiating the preferential translation of ISR-specific mRNAs, such as the transcriptional activator ATF4, and hence allowing ATF4-mediated reprogramming. Acts as a key sensor of heme-deficiency: in normal conditions, binds hemin via a cysteine thiolate and histidine nitrogenous coordination, leading to inhibit the protein kinase activity. This binding occurs with moderate affinity, allowing it to sense the heme concentration within the cell: heme depletion relieves inhibition and stimulates kinase activity, activating the ISR. Thanks to this unique heme-sensing capacity, plays a crucial role to shut off protein synthesis during acute heme-deficient conditions. In red blood cells (RBCs), controls hemoglobin synthesis ensuring a coordinated regulation of the synthesis of its heme and globin moieties. It thereby plays an essential protective role for RBC survival in anemias of iron deficiency. Iron deficiency also triggers activation by full-length DELE1. Also activates the ISR in response to mitochondrial dysfunction: HRI/EIF2AK1 protein kinase activity is activated upon binding to the processed form of DELE1 (S-DELE1), thereby promoting the ATF4-mediated reprogramming. Also acts as an activator of mitophagy in response to mitochondrial damage: catalyzes phosphorylation of eIF-2-alpha (EIF2S1) following activation by S-DELE1, thereby promoting mitochondrial localization of EIF2S1, triggering PRKN-independent mitophagy. The sequence is that of Eukaryotic translation initiation factor 2-alpha kinase 1 from Rattus norvegicus (Rat).